Here is a 357-residue protein sequence, read N- to C-terminus: Histidine biosynthesis bifunctional protein HisB (357 aa).

Residues 1–168 are histidinol-phosphatase; it reads MTPILFIDRD…GIAHALADAP (168 aa). Residue Asp8 is the Nucleophile of the active site. Asp8, Asp10, and Asp128 together coordinate Mg(2+). Catalysis depends on Asp10, which acts as the Proton donor. The interval 169–357 is imidazoleglycerol-phosphate dehydratase; that stretch reads RIAVVQRDTK…TALPTTKGAL (189 aa).

In the N-terminal section; belongs to the histidinol-phosphatase family. The protein in the C-terminal section; belongs to the imidazoleglycerol-phosphate dehydratase family. It depends on Mg(2+) as a cofactor.

The protein resides in the cytoplasm. It carries out the reaction D-erythro-1-(imidazol-4-yl)glycerol 3-phosphate = 3-(imidazol-4-yl)-2-oxopropyl phosphate + H2O. The enzyme catalyses L-histidinol phosphate + H2O = L-histidinol + phosphate. Its pathway is amino-acid biosynthesis; L-histidine biosynthesis; L-histidine from 5-phospho-alpha-D-ribose 1-diphosphate: step 6/9. It participates in amino-acid biosynthesis; L-histidine biosynthesis; L-histidine from 5-phospho-alpha-D-ribose 1-diphosphate: step 8/9. The chain is Histidine biosynthesis bifunctional protein HisB from Stenotrophomonas maltophilia (strain R551-3).